Consider the following 489-residue polypeptide: Trehalose-6-phosphate synthase (489 aa).

Arg22 contributes to the D-glucose 6-phosphate binding site. UDP-alpha-D-glucose is bound at residue 42-43 (GG). Positions 94 and 148 each coordinate D-glucose 6-phosphate. The UDP-alpha-D-glucose site is built by Arg290 and Lys295. Arg328 lines the D-glucose 6-phosphate pocket. 393 to 397 (LVAKE) provides a ligand contact to UDP-alpha-D-glucose.

This sequence belongs to the glycosyltransferase 20 family. As to quaternary structure, homotetramer.

It catalyses the reaction ADP-alpha-D-glucose + D-glucose 6-phosphate = alpha,alpha-trehalose 6-phosphate + ADP + H(+). It carries out the reaction CDP-alpha-D-glucose + D-glucose 6-phosphate = alpha,alpha-trehalose 6-phosphate + CDP + H(+). The catalysed reaction is GDP-alpha-D-glucose + D-glucose 6-phosphate = alpha,alpha-trehalose 6-phosphate + GDP + H(+). The enzyme catalyses TDP-alpha-D-glucose + D-glucose 6-phosphate = 5-methyl-UDP + alpha,alpha-trehalose 6-phosphate + H(+). It catalyses the reaction D-glucose 6-phosphate + UDP-alpha-D-glucose = alpha,alpha-trehalose 6-phosphate + UDP + H(+). It participates in glycan biosynthesis; trehalose biosynthesis. Its function is as follows. Probably involved in the osmoprotection via the biosynthesis of trehalose and in the production of glycogen and alpha-glucan via the TreS-Pep2 branch involved in the biosynthesis of maltose-1-phosphate (M1P). Catalyzes the transfer of glucose from UDP-glucose (UDP-Glc) to D-glucose 6-phosphate (Glc-6-P) to form trehalose-6-phosphate. Probably also able to use ADP-Glc, CDP-Glc, GDP-Glc and TDP-Glc as glucosyl donors. The protein is Trehalose-6-phosphate synthase of Mycobacterium sp. (strain KMS).